Consider the following 269-residue polypeptide: Troponin I (269 aa).

The disordered stretch occupies residues 1–104 (MADDEKKAAA…AKKGFMTPER (104 aa)). The residue at position 2 (Ala2) is an N-acetylalanine. The segment covering 9 to 50 (AAPAAAPAAAAKPAAPAAAPAANGKAAPAANGKAAPAAAAAP) has biased composition (low complexity). Residues 56–91 (DPNDPKVKAEEAKKAKQAEIERKRAEVRKRMEEASK) show a composition bias toward basic and acidic residues. Residues 162–171 (ERMYICEGQK) are troponin T-interaction. Residues 189 to 202 (NAQVNDLRGKFVKP) are actin-binding. Residues Lys201 and Lys205 each carry the N6,N6,N6-trimethyllysine modification. The interval 239–269 (TLEEEEKEKKPDWSKGKPGDAKVKEEVEAEA) is disordered.

This sequence belongs to the troponin I family. Binds to actin and tropomyosin. All isoforms are expressed in somatic muscle. Isoforms containing exon 6a1 (isoforms 1 and 2) are expressed in all muscles but highest expression is in abdominal muscle and splanchnic muscle of the gut. Isoforms containing exon 6b1 (isoforms 5, 6, 9 and 10) are highly expressed in the tergal depressor of trochanter (TDT) muscle.

In terms of biological role, troponin I is the ATPase inhibitory subunit of troponin in the thin filament regulatory complex. Involved in the development and maintenance of muscle and nervous system. May also be involved in the cytoskeletal apparatus. The polypeptide is Troponin I (wupA) (Drosophila melanogaster (Fruit fly)).